Here is a 370-residue protein sequence, read N- to C-terminus: L-selectin (370 aa).

Positions 1-28 (MLCPWKCQNAQRGLWNVFKLWVWIMLCC) are cleaved as a signal peptide. Residues 29–38 (DFFAHHGTDC) constitute a propeptide that is removed on maturation. The Extracellular segment spans residues 39–333 (WTYHYSKRPM…SINEESDYNP (295 aa)). One can recognise a C-type lectin domain in the interval 55–155 (AFCRENYTDL…ACHKAKTALC (101 aa)). 10 disulfides stabilise this stretch: C57–C155, C128–C147, C128–C160, C160–C171, C165–C180, C182–C191, C197–C241, C227–C254, C259–C303, and C289–C316. 3 N-linked (GlcNAc...) asparagine glycosylation sites follow: N60, N77, and N104. Ca(2+) is bound by residues E118, N120, E126, N143, and D144. The EGF-like domain maps to 156-192 (YTASCKPWSCSGHGQCVEVINNYTCNCDLGYYGPECQ). N-linked (GlcNAc...) asparagine glycosylation is present at N177. 2 consecutive Sushi domains span residues 195 to 256 (TQCV…TCRV) and 257 to 318 (IQCE…RCQK). N216, N226, and N246 each carry an N-linked (GlcNAc...) asparagine glycan. N-linked (GlcNAc...) asparagine glycans are attached at residues N308 and N320. The chain crosses the membrane as a helical span at residues 334-354 (LFIPVAVMVTAFSGLAFIIWL). Residues 355–370 (ARRLKRKSKKVSEKHG) lie on the Cytoplasmic side of the membrane.

Belongs to the selectin/LECAM family. Interaction with SELPLG/PSGL1 and PODXL2 is required for promoting recruitment and rolling of leukocytes. This interaction is dependent on the sialyl Lewis X glycan modification of SELPLG and PODXL2, and tyrosine sulfation modifications of SELPLG. Sulfation on 'Tyr-51' of SELPLG is important for L-selectin binding. N-glycosylated. In terms of tissue distribution, highly expressed in lymphocytes from peripheral lymph nodes. Low in lymphocytes isolated from Peyer patches.

Its subcellular location is the cell membrane. In terms of biological role, calcium-dependent lectin that mediates cell adhesion by binding to glycoproteins on neighboring cells. Mediates the adherence of lymphocytes to endothelial cells of high endothelial venules in peripheral lymph nodes. Promotes initial tethering and rolling of leukocytes in endothelia. In Bos taurus (Bovine), this protein is L-selectin (SELL).